A 2364-amino-acid chain; its full sequence is Cytotoxin-L (2364 aa).

The segment at 1–91 (MNLVNKAQLQ…EVLELKNNSL (91 aa)) is four-helical bundle. In terms of domain architecture, GT44 spans 96–468 (KNLHFIWIGG…APDVRSTINL (373 aa)). Positions 96–468 (KNLHFIWIGG…APDVRSTINL (373 aa)) are glucosyltransferase region. Residues 101-103 (IWI), Asn139, 265-270 (LAAASD), and 286-288 (DVD) each bind UDP-alpha-D-glucose. Mg(2+) contacts are provided by Asp288, Glu515, and Ser518. 518 to 520 (SLW) contacts UDP-alpha-D-glucose. The autoprocessing region stretch occupies residues 544–799 (GEDDNLDFAQ…KSKYLHELST (256 aa)). 2 residues coordinate Zn(2+): Glu545 and Asp546. The Peptidase C80 domain maps to 567-774 (LSSMKTRNKE…EESIIKDISS (208 aa)). Residues Tyr577, Lys600, and Lys647 each contribute to the 1D-myo-inositol hexakisphosphate site. Zn(2+) is bound at residue His653. Residue His653 is the For protease activity of the active site. The Nucleophile; for protease activity role is filled by Cys698. Zn(2+) is bound at residue His757. Positions 764, 775, and 792 each coordinate 1D-myo-inositol hexakisphosphate. Residues 800-1500 (LLQEIRNNAN…ESIIRNIYMP (701 aa)) form a translocation region region. 5 interaction with host SEMA6A and SEMA6B regions span residues 1433–1438 (CMKLIE), 1466–1471 (DNETKY), 1484–1495 (FTAEFSNESIIR), 1504–1511 (NLFIYSSK), and 1596–1601 (YNNLDP). Cell wall-binding repeat units follow at residues 1813–1832 (EFGLVSLDNDYFYINSFGNM), 1833–1852 (VSGLIYINDSLYYFKPPKNN), 1854–1873 (ITGFTTIDGNKYYFDPTKSG), 1876–1895 (SIGEITIDGKDYYFNKQGIL), 1926–1945 (FIGKLNIDGKIYYFEDNYRA), 1946–1965 (AVEWKLLDDETYYFNPKTGE), 1967–1986 (LKGLHQIGDNKYYFDDNGIM), 1987–2006 (QTGFITINDKVFYFNNDGVM), 2007–2026 (QVGYIEVNGKYFYFGKNGER), 2057–2076 (YNGILNFNGKIYFFDISNTA), 2077–2097 (VVGWGTLDDGSTYYFDDNRAE), 2099–2118 (CIGLTVINDCKYYFDDNGIR), 2119–2138 (QLGFITINDNIFYFSESGKI), 2139–2158 (ELGYQNINGNYFYIDESGLV), 2209–2224 (ETGWIENETDKYYFDP), 2227–2249 (KKAYKGINVVDDIKYYFDENGIM), 2250–2269 (RTGLISFENNNYYFNEDGKM), 2270–2289 (QFGYLNIKDKMFYFGKDGKM), 2320–2339 (YTGWLDLDGKRYYFTDEYIA), and 2340–2359 (ATGSLTIDGYNYYFDPDTAE). The segment at 1835-2364 (GLIYINDSLY…PDTAELVVSE (530 aa)) is receptor-binding (CROPS) region.

Belongs to the clostridial glucosylating toxin (LCGT) family. Homomultimer; forms an inactive homomultimer at pH 8, which dissociates at pH 4, leading to cytotoxicity. Interacts with host SEMA6A; interaction promotes toxin entry into host cell. Interacts with host SEMA6B; interaction promotes toxin entry into host cell. Requires Zn(2+) as cofactor. Mn(2+) serves as cofactor. Mg(2+) is required as a cofactor. Post-translationally, undergoes autocatalytic cleavage to release the N-terminal part (Glucosyltransferase TcsL), which constitutes the active part of the toxin, in the host cytosol. 1D-myo-inositol hexakisphosphate-binding (InsP6) activates the peptidase C80 domain and promotes autoprocessing.

The protein localises to the secreted. The protein resides in the host endosome membrane. Its subcellular location is the host cytoplasm. It is found in the host cytosol. It localises to the host cell membrane. The catalysed reaction is L-threonyl-[protein] + UDP-alpha-D-glucose = 3-O-(alpha-D-glucosyl)-L-threonyl-[protein] + UDP + H(+). Protease activity is activated upon binding to 1D-myo-inositol hexakisphosphate (InsP6), which induces conformational reorganization. In terms of biological role, precursor of a cytotoxin that targets the vascular endothelium, inducing an anti-inflammatory effect and resulting in lethal toxic shock syndrome. TcsL constitutes the main toxin that mediates the pathology of P.sordellii infection, an anaerobic Gram-positive bacterium found in soil and in the gastrointestinal and vaginal tracts of animals and humans; although the majority of carriers are asymptomatic, pathogenic P.sordellii infections arise rapidly and are highly lethal. This form constitutes the precursor of the toxin: it enters into host cells and mediates autoprocessing to release the active toxin (Glucosyltransferase TcsL) into the host cytosol. Targets vascular endothelium by binding to the semaphorin proteins SEMA6A and SEMA6B, and enters host cells via clathrin-mediated endocytosis. Once entered into host cells, acidification in the endosome promotes the membrane insertion of the translocation region and formation of a pore, leading to translocation of the GT44 and peptidase C80 domains across the endosomal membrane. This activates the peptidase C80 domain and autocatalytic processing, releasing the N-terminal part (Glucosyltransferase TcsL), which constitutes the active part of the toxin, in the cytosol. Its function is as follows. Active form of the toxin, which is released into the host cytosol following autoprocessing and inactivates small GTPases. Acts by mediating monoglucosylation of small GTPases of the Ras (H-Ras/HRAS, K-Ras/KRAS, N-Ras/NRAS and Ral/RALA) family in host cells at the conserved threonine residue located in the switch I region ('Thr-37/35'), using UDP-alpha-D-glucose as the sugar donor. Also able to catalyze monoglucosylation of some members of the Rho family (Rac1 and Rap2A), but with less efficiency than with Ras proteins. Monoglucosylation of host small GTPases completely prevents the recognition of the downstream effector, blocking the GTPases in their inactive form and leading to apoptosis. Induces an anti-inflammatory effect, mainly by inactivating Ras proteins which results in blockage of the cell cycle and killing of immune cells. The absence or moderate local inflammatory response allows C.sordellii spreading in deep tissues, production of toxin which is released in the general circulation and causes a toxic shock syndrome. This chain is Cytotoxin-L, found in Paraclostridium sordellii (Clostridium sordellii).